The primary structure comprises 22 residues: Cysteine proteinase (22 aa).

The tract at residues 1–22 (GADDSDWRKKGAVNVIXKDQGQ) is disordered.

The protein belongs to the peptidase C1 family.

The protein is Cysteine proteinase of Trichomonas vaginalis.